Consider the following 956-residue polypeptide: Calsyntenin-3 (956 aa).

A signal peptide spans 1-19; that stretch reads MTLLLLPLLLASLLASCSC. Residues 1-30 lie on the Cytoplasmic side of the membrane; sequence MTLLLLPLLLASLLASCSCNKANKHKPWIE. Over 20 to 847 the chain is Extracellular; that stretch reads NKANKHKPWI…SHRNSMIPSA (828 aa). Cadherin domains follow at residues 29–145 and 146–246; these read IEAE…APVF and VERL…KPSW. Residues 31–51 constitute an intramembrane region (helical); that stretch reads AEYQGIVMENDNTVLLNPPLF. At 52 to 71 the chain is on the cytoplasmic side; the sequence is ALDKDAPLRYAGEICGFRLH. An intramembrane region (helical) is located at residues 72-94; the sequence is GSGVPFEAVILDKATGEGLIRAK. Residues 95–151 lie on the Cytoplasmic side of the membrane; the sequence is EPVDCEAQKEHTFTIQAYDCGEGPDGANTKKSHKATVHVRVNDVNEFAPVFVERLYR. The helical intramembrane region spans 152 to 172; that stretch reads AAVTEGKLYDRILRVEAIDGD. Residues 173–255 are Cytoplasmic-facing; that stretch reads CSPQYSQICY…WQGWNKRIEY (83 aa). A helical transmembrane segment spans residues 256 to 276; it reads APGAGSLALFPGIRLETCDEP. The Lumenal segment spans residues 277-364; the sequence is LWNIQATIEL…PLGGPSGLGS (88 aa). Asparagine 299, asparagine 327, asparagine 347, asparagine 507, and asparagine 740 each carry an N-linked (GlcNAc...) asparagine glycan. A helical transmembrane segment spans residues 848–868; it reads ATLIIVVCVGFLVLMVVLGLV. The Cytoplasmic portion of the chain corresponds to 869–956; the sequence is RIHSLHRRVS…RIIETPPHRY (88 aa). The segment at 916 to 956 is disordered; sequence QSCVTGAVGGQQEDEDSSDSEVADSPSSDERRIIETPPHRY. Over residues 927–937 the composition is skewed to acidic residues; that stretch reads QEDEDSSDSEV. Over residues 943–956 the composition is skewed to basic and acidic residues; it reads SDERRIIETPPHRY.

It belongs to the calsyntenin family. In terms of assembly, interacts (via cadherin domains) with both alpha and beta isoforms of neurexins (NRXN1, NRXN2 and NRXN3). Directly interacts with APBA2. Forms a tripartite complex with APBA2 and APP. Interacts with low affinity with KLC1. Interacts with SLC23A2/SVCT2. Interacts with CIDEA; inhibiting the lipid transferase activity of CIDEA. Interacts with CIDEC; inhibiting the lipid transferase activity of CIDEC. In terms of processing, proteolytically processed under normal cellular conditions. A primary zeta-cleavage generates a large extracellular (soluble) N-terminal domain (sAlc) and a short C-terminal transmembrane fragment (CTF1). A secondary cleavage catalyzed by gamma-secretase within the transmembrane domain releases the beta-Alc-beta chain in the extracellular milieu and produces an intracellular fragment (AlcICD). This processing is strongly suppressed in the tripartite complex formed with APBA2 and APP, which seems to prevent the association with gamma-secretase. Post-translationally, ubiquitinated: endoplasmic reticulum-localized protein is ubiquitinated and degraded by the endoplasmic reticulum-associated degradation (ERAD) pathway. As to expression, according to PubMed:12498782, expressed predominantly in the brain and in kidney. Low levels in heart, skeletal muscle, liver, placenta, pancreas and lung. According to PubMed:12972431, predominant expression in brain, and only marginal in kidney. In brain, present throughout all cortical layers, highest levels in GABAergic neurons (based on morphology and distribution pattern). In terms of tissue distribution, expression is restricted to adipose tissue, with high expression in multilocular thermogenic adipocytes (brown adipose tissue).

It localises to the postsynaptic cell membrane. The protein localises to the endoplasmic reticulum membrane. Its subcellular location is the golgi apparatus membrane. It is found in the cell projection. The protein resides in the dendrite. It localises to the lipid droplet. Its function is as follows. Postsynaptic adhesion molecule that binds to presynaptic neurexins to mediate both excitatory and inhibitory synapse formation. Promotes synapse development by acting as a cell adhesion molecule at the postsynaptic membrane, which associates with both neurexin-alpha and neurexin-beta proteins at the presynaptic membrane. Regulates the balance between excitatory and inhibitory synapses by inhibiting formation of excitatory parallel-fiber synapses and promoting formation of inhibitory synapses in the same neuron. May also be involved in ascorbate (vitamin C) uptake via its interaction with SLC23A2/SVCT2. Complex formation with APBA2 and APP, stabilizes APP metabolism and enhances APBA2-mediated suppression of beta-APP40 secretion, due to the retardation of intracellular APP maturation. In terms of biological role, adipose-specific isoform that plays a key role in adaptive thermogenesis. Facilitates the efficient use of stored triglyceride by promoting multilocular morphology of thermogenic adipocytes: acts by inhibiting the activity of CIDEA and CIDEC on lipid droplets, thereby preventing lipid droplet fusion and facilitating lipid utilization. May also participate in adaptive thermogenesis by promoting sympathetic innervation of thermogenic adipose tissue: acts by driving secretion of neurotrophic factor S100B from brown adipocytes, stimulating neurite outgrowth from sympathetic neurons. This is Calsyntenin-3 from Homo sapiens (Human).